The primary structure comprises 616 residues: Sulfite reductase [NADPH] hemoprotein beta-component (616 aa).

A compositionally biased stretch (basic and acidic residues) spans 1–10 (MDDHSPRDAA). Positions 1-35 (MDDHSPRDAAETPAPGPAATPAKRVYETPPTSRPI) are disordered. Residues 11–22 (ETPAPGPAATPA) are compositionally biased toward low complexity. 4 residues coordinate [4Fe-4S] cluster: C470, C476, C515, and C519. C519 serves as a coordination point for siroheme.

The protein belongs to the nitrite and sulfite reductase 4Fe-4S domain family. As to quaternary structure, alpha(8)-beta(8). The alpha component is a flavoprotein, the beta component is a hemoprotein. The cofactor is siroheme. It depends on [4Fe-4S] cluster as a cofactor.

The enzyme catalyses hydrogen sulfide + 3 NADP(+) + 3 H2O = sulfite + 3 NADPH + 4 H(+). Its pathway is sulfur metabolism; hydrogen sulfide biosynthesis; hydrogen sulfide from sulfite (NADPH route): step 1/1. Functionally, component of the sulfite reductase complex that catalyzes the 6-electron reduction of sulfite to sulfide. This is one of several activities required for the biosynthesis of L-cysteine from sulfate. The polypeptide is Sulfite reductase [NADPH] hemoprotein beta-component (Methylobacterium radiotolerans (strain ATCC 27329 / DSM 1819 / JCM 2831 / NBRC 15690 / NCIMB 10815 / 0-1)).